We begin with the raw amino-acid sequence, 225 residues long: Ribosomal RNA small subunit methyltransferase G (225 aa).

S-adenosyl-L-methionine contacts are provided by residues G84, F89, 107–109 (DST), 135–136 (AE), and R154.

It belongs to the methyltransferase superfamily. RNA methyltransferase RsmG family.

Its subcellular location is the cytoplasm. Specifically methylates the N7 position of a guanine in 16S rRNA. The protein is Ribosomal RNA small subunit methyltransferase G of Microcystis aeruginosa (strain NIES-843 / IAM M-2473).